Consider the following 352-residue polypeptide: Phosphoribosylformylglycinamidine cyclo-ligase (352 aa).

This sequence belongs to the AIR synthase family.

It localises to the cytoplasm. The enzyme catalyses 2-formamido-N(1)-(5-O-phospho-beta-D-ribosyl)acetamidine + ATP = 5-amino-1-(5-phospho-beta-D-ribosyl)imidazole + ADP + phosphate + H(+). It functions in the pathway purine metabolism; IMP biosynthesis via de novo pathway; 5-amino-1-(5-phospho-D-ribosyl)imidazole from N(2)-formyl-N(1)-(5-phospho-D-ribosyl)glycinamide: step 2/2. The sequence is that of Phosphoribosylformylglycinamidine cyclo-ligase from Pseudomonas fluorescens (strain ATCC BAA-477 / NRRL B-23932 / Pf-5).